The primary structure comprises 344 residues: Probable electron transfer flavoprotein subunit alpha, mitochondrial (344 aa).

284 to 312 is a binding site for FAD; that stretch reads LYIAIGVSGAVQHLAGMKDSKVIVAINND.

Belongs to the ETF alpha-subunit/FixB family. As to quaternary structure, heterodimer of an alpha and a beta subunit. The cofactor is FAD.

It localises to the mitochondrion matrix. In terms of biological role, the electron transfer flavoprotein serves as a specific electron acceptor for several dehydrogenases, including five acyl-CoA dehydrogenases, glutaryl-CoA and sarcosine dehydrogenase. It transfers the electrons to the main mitochondrial respiratory chain via ETF-ubiquinone oxidoreductase (ETF dehydrogenase). The polypeptide is Probable electron transfer flavoprotein subunit alpha, mitochondrial (AIM45) (Saccharomyces cerevisiae (strain ATCC 204508 / S288c) (Baker's yeast)).